A 270-amino-acid polypeptide reads, in one-letter code: Putative pyruvate, phosphate dikinase regulatory protein (270 aa).

148-155 (GVSRTSKT) is a binding site for ADP.

Belongs to the pyruvate, phosphate/water dikinase regulatory protein family. PDRP subfamily.

The enzyme catalyses N(tele)-phospho-L-histidyl/L-threonyl-[pyruvate, phosphate dikinase] + ADP = N(tele)-phospho-L-histidyl/O-phospho-L-threonyl-[pyruvate, phosphate dikinase] + AMP + H(+). The catalysed reaction is N(tele)-phospho-L-histidyl/O-phospho-L-threonyl-[pyruvate, phosphate dikinase] + phosphate + H(+) = N(tele)-phospho-L-histidyl/L-threonyl-[pyruvate, phosphate dikinase] + diphosphate. Bifunctional serine/threonine kinase and phosphorylase involved in the regulation of the pyruvate, phosphate dikinase (PPDK) by catalyzing its phosphorylation/dephosphorylation. This Bacillus cytotoxicus (strain DSM 22905 / CIP 110041 / 391-98 / NVH 391-98) protein is Putative pyruvate, phosphate dikinase regulatory protein.